We begin with the raw amino-acid sequence, 156 residues long: Protein LlR18A (156 aa).

Trans-zeatin contacts are provided by N8 and D28. Residues P32 and I38 each contribute to the Ca(2+) site. 3 residues coordinate trans-zeatin: K54, D133, and K136.

The protein belongs to the BetVI family. In terms of tissue distribution, expressed constitutively in roots.

Its subcellular location is the cytoplasm. The protein resides in the cytosol. Class II ribonuclease (RNase). Binds to cytokinins. Interacts with melatonin. This chain is Protein LlR18A (LLR18A), found in Lupinus luteus (European yellow lupine).